The chain runs to 465 residues: Cruciferin CRU4 (465 aa).

An N-terminal signal peptide occupies residues 1 to 22; it reads MGPTSLLSFFFTFLTLFHGFTA. 2 disulfide bridges follow: C29/C62 and C105/C283. Cupin type-1 domains lie at 34–236 and 289–438; these read LNAL…ETAQ and ENLD…QEAR. The residue at position 108 (T108) is a Phosphothreonine. The disordered stretch occupies residues 112-135; that stretch reads SPVFGQGQGQEQGQGQGQGQGQGF. A compositionally biased stretch (gly residues) spans 117 to 133; it reads QGQGQEQGQGQGQGQGQ. Y306 is modified (phosphotyrosine). 2 positions are modified to phosphoserine: S308 and S443.

It belongs to the 11S seed storage protein (globulins) family. In terms of assembly, heterohexamer; each subunit is composed of an acidic and a basic chain derived from a single precursor and linked by a disulfide bond.

The protein resides in the rough endoplasmic reticulum. Functionally, this is a seed storage protein. The protein is Cruciferin CRU4 (CRU4) of Brassica napus (Rape).